The following is a 104-amino-acid chain: Complex III assembly factor LYRM7 (104 aa).

Residues 21-48 (VFQNDHRALEAARQRINEEFKKNKRECS) are a coiled coil.

It belongs to the complex I LYR family. Interacts with UQCRFS1.

It localises to the mitochondrion matrix. Assembly factor required for Rieske Fe-S protein UQCRFS1 incorporation into the cytochrome b-c1 (CIII) complex. Functions as a chaperone, binding to this subunit within the mitochondrial matrix and stabilizing it prior to its translocation and insertion into the late CIII dimeric intermediate within the mitochondrial inner membrane. This chain is Complex III assembly factor LYRM7 (lyrm7), found in Xenopus laevis (African clawed frog).